Here is a 410-residue protein sequence, read N- to C-terminus: Sprouty-related, EVH1 domain-containing protein 2 (410 aa).

One can recognise a WH1 domain in the interval 5-122 (THPDDDSYIV…RGVRKAIEDL (118 aa)). Residues 127–171 (TTSSSTLHNEAELGDDDVFTTATDSSSNSSQKREPTTRTISSPTS) form a disordered region. Positions 146–156 (TTATDSSSNSS) are enriched in polar residues. A KBD domain is found at 197 to 252 (SYPQVTFPEDDEEIVRINPREKIWMTGYEDYRHAPVRGKYLDTTEDADSYVRFAKG). A phosphotyrosine mark is found at tyrosine 224 and tyrosine 227. The disordered stretch occupies residues 274–294 (DPKGSVIKTQPPRAKSRRRKE). In terms of domain architecture, SPR spans 300-408 (RCVYCRDMFN…CRCCGGKHKA (109 aa)).

Homodimer and heterodimer. Able to interact with SPRED1 to form heterodimers. Interacts with RAS. May interact with ZDHHC13 (via ANK repeats) and ZDHHC17 (via ANK repeats). Interacts with TESK1. Interacts with NF1. In terms of processing, phosphorylated on serine and threonine residues. Phosphorylated on tyrosine. Phosphorylation of Tyr-224 and Tyr-227 are required for ubiquitination. Ubiquitinated; leading to degradation by the proteasome. As to expression, predominantly expressed in lung, liver and testis. In testis, it is specially found in mature spermatids projecting into the lumen of the seminiferous. Strongly expressed in glandular epithelia. Also expressed in embryonic tissues such as heart, lung, liver and brain.

The protein localises to the cell membrane. It is found in the cytoplasmic vesicle. Its subcellular location is the secretory vesicle membrane. The protein resides in the cytoplasm. In terms of biological role, negatively regulates Ras signaling pathways and downstream activation of MAP kinases. Recruits and translocates NF1 to the cell membrane, thereby enabling NF1-dependent hydrolysis of active GTP-bound Ras to inactive GDP-bound Ras. Inhibits fibroblast growth factor (FGF)-induced retinal lens fiber differentiation, probably by inhibiting FGF-mediated phosphorylation of ERK1/2. Inhibits TGFB-induced epithelial-to-mesenchymal transition in lens epithelial cells. This is Sprouty-related, EVH1 domain-containing protein 2 (Spred2) from Mus musculus (Mouse).